The sequence spans 151 residues: Ribosome maturation factor RimP (151 aa).

This sequence belongs to the RimP family.

It localises to the cytoplasm. Its function is as follows. Required for maturation of 30S ribosomal subunits. This chain is Ribosome maturation factor RimP, found in Shewanella piezotolerans (strain WP3 / JCM 13877).